A 60-amino-acid chain; its full sequence is uncharacterized protein (60 aa).

Residues 27–49 form a helical membrane-spanning segment; sequence YYWLVSTARMVLGVTILILILIG.

It localises to the membrane. This is an uncharacterized protein from Archaeoglobus fulgidus (strain ATCC 49558 / DSM 4304 / JCM 9628 / NBRC 100126 / VC-16).